Here is a 119-residue protein sequence, read N- to C-terminus: Large ribosomal subunit protein uL18 (119 aa).

Belongs to the universal ribosomal protein uL18 family. As to quaternary structure, part of the 50S ribosomal subunit; part of the 5S rRNA/L5/L18/L25 subcomplex. Contacts the 5S and 23S rRNAs.

In terms of biological role, this is one of the proteins that bind and probably mediate the attachment of the 5S RNA into the large ribosomal subunit, where it forms part of the central protuberance. The polypeptide is Large ribosomal subunit protein uL18 (Cupriavidus taiwanensis (strain DSM 17343 / BCRC 17206 / CCUG 44338 / CIP 107171 / LMG 19424 / R1) (Ralstonia taiwanensis (strain LMG 19424))).